We begin with the raw amino-acid sequence, 73 residues long: Putative membrane protein insertion efficiency factor (73 aa).

The protein belongs to the UPF0161 family.

Its subcellular location is the cell inner membrane. Its function is as follows. Could be involved in insertion of integral membrane proteins into the membrane. The protein is Putative membrane protein insertion efficiency factor of Parabacteroides distasonis (strain ATCC 8503 / DSM 20701 / CIP 104284 / JCM 5825 / NCTC 11152).